The sequence spans 152 residues: Superoxide dismutase [Cu-Zn] (152 aa).

Residues histidine 45, histidine 47, and histidine 62 each coordinate Cu cation. The cysteines at positions 56 and 145 are disulfide-linked. Residues histidine 62, histidine 70, histidine 79, and aspartate 82 each coordinate Zn(2+). Histidine 119 contributes to the Cu cation binding site.

This sequence belongs to the Cu-Zn superoxide dismutase family. Homodimer. It depends on Cu cation as a cofactor. The cofactor is Zn(2+).

The protein resides in the cytoplasm. It catalyses the reaction 2 superoxide + 2 H(+) = H2O2 + O2. Its function is as follows. Destroys radicals which are normally produced within the cells and which are toxic to biological systems. This chain is Superoxide dismutase [Cu-Zn] (SODCC), found in Carica papaya (Papaya).